We begin with the raw amino-acid sequence, 137 residues long: Transcription antitermination protein NusB (137 aa).

This sequence belongs to the NusB family.

Its function is as follows. Involved in transcription antitermination. Required for transcription of ribosomal RNA (rRNA) genes. Binds specifically to the boxA antiterminator sequence of the ribosomal RNA (rrn) operons. In Clavibacter michiganensis subsp. michiganensis (strain NCPPB 382), this protein is Transcription antitermination protein NusB.